The chain runs to 1047 residues: Suppression of tumorigenicity 18 protein (1047 aa).

3 disordered regions span residues 41-92 (TAED…HSTA), 168-221 (FLIH…VPKY), and 251-286 (DSETERKDPQNALAEPLDGNAQPSFPDVEEEDSESL). Over residues 52–65 (NKRKSLLMKPRHYS) the composition is skewed to basic residues. Residues 171-181 (HSDDGRDKIDD) show a composition bias toward basic and acidic residues. 2 consecutive CCHHC-type zinc fingers follow at residues 359–402 (PRPE…PLEI) and 403–446 (LAMH…KLAM). Residues cysteine 368, cysteine 373, histidine 386, cysteine 392, cysteine 412, cysteine 417, histidine 430, and cysteine 436 each coordinate Zn(2+). Disordered stretches follow at residues 523 to 563 (GRKT…SYSY) and 672 to 710 (YSKTHGKTEEEKEKDPVSSLENLEEKKFPGEASIPSPKP). The segment covering 550–563 (AHTQSPGRASSYSY) has biased composition (polar residues). Basic and acidic residues predominate over residues 677-687 (GKTEEEKEKDP). 4 CCHHC-type zinc fingers span residues 715-758 (RDLK…LKSL), 759-802 (MAAN…GVKM), 807-850 (EEKE…QKEN), and 860-903 (KLNK…IKKG). Positions 724, 729, 742, 748, 768, 773, 786, 792, 816, 821, 834, 840, 869, 874, 887, and 893 each coordinate Zn(2+). A coiled-coil region spans residues 920–992 (IESDEEIRHL…AGLSQALISS (73 aa)).

Belongs to the MYT1 family. As to expression, detected at low levels in heart, liver, kidney, skeletal muscle, pancreas, testis, ovary and prostate. Detected at even lower levels in mammary epithelial cells and breast cancer cells.

The protein resides in the nucleus. In terms of biological role, repressor that binds to DNA sequences containing a bipartite element consisting of a direct repeat of the sequence 5'-AAAGTTT-3' separated by 2-9 nucleotides. Represses basal transcription activity from target promoters. Inhibits colony formation in cultured breast cancer cells. This Homo sapiens (Human) protein is Suppression of tumorigenicity 18 protein (ST18).